A 1353-amino-acid chain; its full sequence is DNA-directed RNA polymerase subunit beta' (1353 aa).

Positions 1–117 (MSDNRLFTSV…AFQKLNDLFK (117 aa)) are unknown. The DNA-directed RNA polymerase subunit beta' stretch occupies residues 118 to 1353 (LYNHFPSISS…SELAEKTNQN (1236 aa)). Residues Cys189, Cys191, Cys203, and Cys206 each contribute to the Zn(2+) site. Mg(2+) contacts are provided by Asp578, Asp580, and Asp582.

The protein belongs to the RNA polymerase beta' chain family. The RNAP catalytic core consists of 2 alpha, 1 beta, 1 beta' and 1 omega subunit. When a sigma factor is associated with the core the holoenzyme is formed, which can initiate transcription. Mg(2+) is required as a cofactor. Requires Zn(2+) as cofactor.

It catalyses the reaction RNA(n) + a ribonucleoside 5'-triphosphate = RNA(n+1) + diphosphate. In terms of biological role, DNA-dependent RNA polymerase catalyzes the transcription of DNA into RNA using the four ribonucleoside triphosphates as substrates. The polypeptide is DNA-directed RNA polymerase subunit beta' (Onion yellows phytoplasma (strain OY-M)).